A 329-amino-acid chain; its full sequence is Sulfate/thiosulfate import ATP-binding protein CysA (329 aa).

The 235-residue stretch at 3–237 (IEVRNVSKRF…PANDFVYHFL (235 aa)) folds into the ABC transporter domain. 35–42 (GPSGCGKT) contacts ATP.

Belongs to the ABC transporter superfamily. Sulfate/tungstate importer (TC 3.A.1.6) family. The complex is composed of two ATP-binding proteins (CysA), two transmembrane proteins (CysT and CysW) and a solute-binding protein (CysP).

It is found in the cell inner membrane. It catalyses the reaction sulfate(out) + ATP + H2O = sulfate(in) + ADP + phosphate + H(+). It carries out the reaction thiosulfate(out) + ATP + H2O = thiosulfate(in) + ADP + phosphate + H(+). Part of the ABC transporter complex CysAWTP involved in sulfate/thiosulfate import. Responsible for energy coupling to the transport system. The protein is Sulfate/thiosulfate import ATP-binding protein CysA of Pseudomonas putida (strain ATCC 47054 / DSM 6125 / CFBP 8728 / NCIMB 11950 / KT2440).